The chain runs to 505 residues: ATP synthase subunit alpha (505 aa).

171–178 (GDRQTGKT) contributes to the ATP binding site.

Belongs to the ATPase alpha/beta chains family. As to quaternary structure, F-type ATPases have 2 components, CF(1) - the catalytic core - and CF(0) - the membrane proton channel. CF(1) has five subunits: alpha(3), beta(3), gamma(1), delta(1), epsilon(1). CF(0) has three main subunits: a(1), b(2) and c(9-12). The alpha and beta chains form an alternating ring which encloses part of the gamma chain. CF(1) is attached to CF(0) by a central stalk formed by the gamma and epsilon chains, while a peripheral stalk is formed by the delta and b chains.

The protein resides in the cell inner membrane. It catalyses the reaction ATP + H2O + 4 H(+)(in) = ADP + phosphate + 5 H(+)(out). Its function is as follows. Produces ATP from ADP in the presence of a proton gradient across the membrane. The alpha chain is a regulatory subunit. The polypeptide is ATP synthase subunit alpha (Campylobacter curvus (strain 525.92)).